Consider the following 84-residue polypeptide: Cell division topological specificity factor (84 aa).

It belongs to the MinE family.

Its function is as follows. Prevents the cell division inhibition by proteins MinC and MinD at internal division sites while permitting inhibition at polar sites. This ensures cell division at the proper site by restricting the formation of a division septum at the midpoint of the long axis of the cell. This Burkholderia ambifaria (strain MC40-6) protein is Cell division topological specificity factor.